We begin with the raw amino-acid sequence, 408 residues long: MAVSYDLRPIGTCPVRESDNIIVKERSKLSLIGLSQDEMAEALKAIGIPERQTRMRVRQLWHWLYVRGVSNFDEMLNISKPMQEIFKKHFSIARPEIAGEQISKDGTRKWLLRFPPRGAGRPVEIETVYIPEEGRGTLCLSSQVGCTLTCSFCYTGTQVLVRNLTAEEILAQLLVARDCLGDFPDRNTPDGAIVPVEGRKITNIVMMGMGEPLYNFEAVKKALLIASDGNGLSLSKRRITLSTSGVVPGMIRTGEEIGVMLAISLHAVNDTLRDMLVPINKKYPLALLMDACRQYPGLSNAKRITFEYVMLKDVNDSLDDAKRLVQLLKGIPAKINLIPFNPWPGSNYQCSDWEQIERFADVVNQAGYASPIRIPRGRDILAACGQLKSASERLRKSERLHLEHIVNS.

E126 serves as the catalytic Proton acceptor. The Radical SAM core domain maps to 132-373 (EEGRGTLCLS…NQAGYASPIR (242 aa)). Residues C139 and C384 are joined by a disulfide bond. [4Fe-4S] cluster is bound by residues C146, C150, and C153. S-adenosyl-L-methionine contacts are provided by residues 210–211 (GE), S242, 264–266 (SLH), and N341. The S-methylcysteine intermediate role is filled by C384.

Belongs to the radical SAM superfamily. RlmN family. The cofactor is [4Fe-4S] cluster.

The protein resides in the cytoplasm. It catalyses the reaction adenosine(2503) in 23S rRNA + 2 reduced [2Fe-2S]-[ferredoxin] + 2 S-adenosyl-L-methionine = 2-methyladenosine(2503) in 23S rRNA + 5'-deoxyadenosine + L-methionine + 2 oxidized [2Fe-2S]-[ferredoxin] + S-adenosyl-L-homocysteine. The enzyme catalyses adenosine(37) in tRNA + 2 reduced [2Fe-2S]-[ferredoxin] + 2 S-adenosyl-L-methionine = 2-methyladenosine(37) in tRNA + 5'-deoxyadenosine + L-methionine + 2 oxidized [2Fe-2S]-[ferredoxin] + S-adenosyl-L-homocysteine. Specifically methylates position 2 of adenine 2503 in 23S rRNA and position 2 of adenine 37 in tRNAs. m2A2503 modification seems to play a crucial role in the proofreading step occurring at the peptidyl transferase center and thus would serve to optimize ribosomal fidelity. The sequence is that of Dual-specificity RNA methyltransferase RlmN from Bartonella henselae (strain ATCC 49882 / DSM 28221 / CCUG 30454 / Houston 1) (Rochalimaea henselae).